Consider the following 650-residue polypeptide: Pentatricopeptide repeat-containing protein At1g51965, mitochondrial (650 aa).

The N-terminal 23 residues, 1–23, are a transit peptide targeting the mitochondrion; that stretch reads MKLLRRRFFNSVNTITRPNRRHY. PPR repeat units lie at residues 132-169, 170-200, 202-236, 237-267, 269-303, 304-338, 339-369, 371-405, 406-440, 441-475, 476-510, 511-545, 546-580, and 581-615; these read DPFL…NVHG, NIST…WDLK, NSFT…GHKL, DIFA…RHCR, DEYT…GLTL, NVVG…GCRP, NEYT…SKRY, TQGI…PVKG, ERDS…GVVT, DTMM…GPSP, DIFT…DCKP, DIIS…GLNP, DVVT…GCQP, and NIVT…GLTP.

It belongs to the PPR family. P subfamily.

Its subcellular location is the mitochondrion. In Arabidopsis thaliana (Mouse-ear cress), this protein is Pentatricopeptide repeat-containing protein At1g51965, mitochondrial.